The chain runs to 292 residues: Phosphatidylserine decarboxylase proenzyme (292 aa).

Catalysis depends on charge relay system; for autoendoproteolytic cleavage activity residues D92, H149, and S255. S255 functions as the Schiff-base intermediate with substrate; via pyruvic acid; for decarboxylase activity in the catalytic mechanism. A Pyruvic acid (Ser); by autocatalysis modification is found at S255.

The protein belongs to the phosphatidylserine decarboxylase family. PSD-B subfamily. Prokaryotic type I sub-subfamily. Heterodimer of a large membrane-associated beta subunit and a small pyruvoyl-containing alpha subunit. Requires pyruvate as cofactor. Post-translationally, is synthesized initially as an inactive proenzyme. Formation of the active enzyme involves a self-maturation process in which the active site pyruvoyl group is generated from an internal serine residue via an autocatalytic post-translational modification. Two non-identical subunits are generated from the proenzyme in this reaction, and the pyruvate is formed at the N-terminus of the alpha chain, which is derived from the carboxyl end of the proenzyme. The autoendoproteolytic cleavage occurs by a canonical serine protease mechanism, in which the side chain hydroxyl group of the serine supplies its oxygen atom to form the C-terminus of the beta chain, while the remainder of the serine residue undergoes an oxidative deamination to produce ammonia and the pyruvoyl prosthetic group on the alpha chain. During this reaction, the Ser that is part of the protease active site of the proenzyme becomes the pyruvoyl prosthetic group, which constitutes an essential element of the active site of the mature decarboxylase.

Its subcellular location is the cell membrane. It carries out the reaction a 1,2-diacyl-sn-glycero-3-phospho-L-serine + H(+) = a 1,2-diacyl-sn-glycero-3-phosphoethanolamine + CO2. It functions in the pathway phospholipid metabolism; phosphatidylethanolamine biosynthesis; phosphatidylethanolamine from CDP-diacylglycerol: step 2/2. Its function is as follows. Catalyzes the formation of phosphatidylethanolamine (PtdEtn) from phosphatidylserine (PtdSer). The protein is Phosphatidylserine decarboxylase proenzyme of Idiomarina loihiensis (strain ATCC BAA-735 / DSM 15497 / L2-TR).